The chain runs to 231 residues: Putative transglycosylase H16_A0665 (231 aa).

The helical transmembrane segment at 8–28 (FIKLLVLAVIGGALLAAIAIL) threads the bilayer.

It belongs to the glycosyltransferase 51 family.

Its subcellular location is the secreted. The protein resides in the membrane. It functions in the pathway cell wall biogenesis; peptidoglycan biosynthesis. Functionally, cell wall formation. The polypeptide is Putative transglycosylase H16_A0665 (Cupriavidus necator (strain ATCC 17699 / DSM 428 / KCTC 22496 / NCIMB 10442 / H16 / Stanier 337) (Ralstonia eutropha)).